Consider the following 25-residue polypeptide: Brevinin-2R (25 aa).

Cysteines 19 and 25 form a disulfide.

It belongs to the frog skin active peptide (FSAP) family. Brevinin subfamily. As to expression, expressed by the skin glands.

It is found in the secreted. In terms of biological role, cytotoxic to cancer cells, acts via the activation of the lysosomal-mitochondrial death pathway and autophagy-like cell death. Does not show significant hemolytic activity. In Pelophylax ridibundus (Marsh frog), this protein is Brevinin-2R.